The sequence spans 46 residues: Large ribosomal subunit protein bL36A (46 aa).

This sequence belongs to the bacterial ribosomal protein bL36 family.

This is Large ribosomal subunit protein bL36A from Sodalis glossinidius (strain morsitans).